The following is a 413-amino-acid chain: Type IV pilus assembly protein TapC (413 aa).

4 helical membrane-spanning segments follow: residues 180 to 200 (YPAM…LFVI), 227 to 247 (FMQH…FLYV), 286 to 306 (LSTT…AAGA), and 386 to 406 (IMVV…LPIF).

This sequence belongs to the GSP F family.

The protein localises to the cell inner membrane. In terms of biological role, involved in the translocation of the type IV pilin. The protein is Type IV pilus assembly protein TapC (tapC) of Aeromonas hydrophila.